We begin with the raw amino-acid sequence, 260 residues long: Chloride intracellular channel Clic (260 aa).

The chain crosses the membrane as a helical span at residues 42-66; that stretch reads FCQEYFMDLYLLAELKTISLKVTTV.

This sequence belongs to the chloride channel CLIC family. Expressed in cardiac tubes.

It localises to the mitochondrion. It is found in the membrane. Might insert into membranes and form chloride ion channels. Channel activity depends on the pH. May play a role in ethanol sensitivity. In Drosophila melanogaster (Fruit fly), this protein is Chloride intracellular channel Clic.